The primary structure comprises 508 residues: Probable cytosol aminopeptidase (508 aa).

The Mn(2+) site is built by Lys-274 and Asp-279. Lys-286 is a catalytic residue. Residues Asp-297, Asp-356, and Glu-358 each coordinate Mn(2+). Arg-360 is an active-site residue.

Belongs to the peptidase M17 family. It depends on Mn(2+) as a cofactor.

It is found in the cytoplasm. It catalyses the reaction Release of an N-terminal amino acid, Xaa-|-Yaa-, in which Xaa is preferably Leu, but may be other amino acids including Pro although not Arg or Lys, and Yaa may be Pro. Amino acid amides and methyl esters are also readily hydrolyzed, but rates on arylamides are exceedingly low.. The catalysed reaction is Release of an N-terminal amino acid, preferentially leucine, but not glutamic or aspartic acids.. Its function is as follows. Presumably involved in the processing and regular turnover of intracellular proteins. Catalyzes the removal of unsubstituted N-terminal amino acids from various peptides. The polypeptide is Probable cytosol aminopeptidase (Paraburkholderia phytofirmans (strain DSM 17436 / LMG 22146 / PsJN) (Burkholderia phytofirmans)).